Reading from the N-terminus, the 429-residue chain is ATP-dependent RNA helicase RhlB (429 aa).

Positions 9–37 (DKFAQMGLEPEVLAGLESKGFHYCTPIQA) match the Q motif motif. One can recognise a Helicase ATP-binding domain in the interval 40–219 (LPLLVEGHDL…YEHMNHPEHV (180 aa)). Position 53–60 (53–60 (AQTGTGKT)) interacts with ATP. Positions 165-168 (DEAD) match the DEAD box motif. One can recognise a Helicase C-terminal domain in the interval 243–390 (KMLLLLSLME…VSKYDREALL (148 aa)). The disordered stretch occupies residues 399 to 429 (VFRNRQPVNRNMRDRQGGGNSNNRRRPPRKS).

Belongs to the DEAD box helicase family. RhlB subfamily. Component of the RNA degradosome, which is a multiprotein complex involved in RNA processing and mRNA degradation.

Its subcellular location is the cytoplasm. The enzyme catalyses ATP + H2O = ADP + phosphate + H(+). Its function is as follows. DEAD-box RNA helicase involved in RNA degradation. Has RNA-dependent ATPase activity and unwinds double-stranded RNA. This is ATP-dependent RNA helicase RhlB from Aeromonas hydrophila subsp. hydrophila (strain ATCC 7966 / DSM 30187 / BCRC 13018 / CCUG 14551 / JCM 1027 / KCTC 2358 / NCIMB 9240 / NCTC 8049).